The following is a 247-amino-acid chain: DNA repair protein RecO (247 aa).

It belongs to the RecO family.

Involved in DNA repair and RecF pathway recombination. This Caldanaerobacter subterraneus subsp. tengcongensis (strain DSM 15242 / JCM 11007 / NBRC 100824 / MB4) (Thermoanaerobacter tengcongensis) protein is DNA repair protein RecO.